We begin with the raw amino-acid sequence, 198 residues long: Carnitine operon protein CaiE (198 aa).

The disordered stretch occupies residues 179 to 198 (VEENRPRLKGTTDVKPKSAQ). Positions 180–198 (EENRPRLKGTTDVKPKSAQ) are enriched in basic and acidic residues.

This sequence belongs to the transferase hexapeptide repeat family.

It functions in the pathway amine and polyamine metabolism; carnitine metabolism. Overproduction of CaiE stimulates the activity of CaiB and CaiD. This chain is Carnitine operon protein CaiE, found in Salmonella typhi.